Consider the following 304-residue polypeptide: N-acetyl-D-glucosamine kinase (304 aa).

Residues 4 to 11 (GFDMGGTK) and 133 to 140 (GVGGGLIV) each bind ATP. Positions 157, 177, 179, and 184 each coordinate Zn(2+).

Belongs to the ROK (NagC/XylR) family. NagK subfamily.

The enzyme catalyses N-acetyl-D-glucosamine + ATP = N-acetyl-D-glucosamine 6-phosphate + ADP + H(+). It participates in cell wall biogenesis; peptidoglycan recycling. Functionally, catalyzes the phosphorylation of N-acetyl-D-glucosamine (GlcNAc) derived from cell-wall degradation, yielding GlcNAc-6-P. In Yersinia pseudotuberculosis serotype O:3 (strain YPIII), this protein is N-acetyl-D-glucosamine kinase.